Reading from the N-terminus, the 1854-residue chain is PKS-NRPS hybrid synthetase ATPKS (1854 aa).

An adenylation (A) domain region spans residues 24 to 423 (FDQTQTRYSP…GRADTQIKIR (400 aa)). In terms of domain architecture, Carrier 1 spans 523–598 (IPASTLTQQL…NLAAYLSDQT (76 aa)). Ser558 carries the O-(pantetheine 4'-phosphoryl)serine modification. The region spanning 617 to 1049 (GEDIAVISMA…GTNAHAIIEE (433 aa)) is the Ketosynthase family 3 (KS3) domain. Residues Cys791, His926, and His967 each act as for beta-ketoacyl synthase activity in the active site. The interval 1162-1496 (LFSGQGTERA…SLSDLHIRKV (335 aa)) is malonyl-CoA:ACP transacylase (MAT) domain. The segment at 1536–1556 (KSSGQPSGQSPSGCPQPTGQI) is disordered. Residues 1537–1555 (SSGQPSGQSPSGCPQPTGQ) show a composition bias toward low complexity. A Carrier 2 domain is found at 1776–1851 (MMLQGLVRGI…SLSDALQKQV (76 aa)). O-(pantetheine 4'-phosphoryl)serine is present on Ser1811.

It in the C-terminal section; belongs to the NRP synthetase family.

It functions in the pathway secondary metabolite biosynthesis. Its function is as follows. PKS-NRPS hybrid synthetase; part of the gene cluster that mediates the biosynthesis of pyrophen and campyrone B, which represent a class of fungal amino acid-derived alpha-pyrone natural products. The first step of pyrophen biosynthesis is catalyzed by the PKS-NRPS hybrid synthetase ATPKS that uptakes and condensates L-phenylalanine and malonyl-CoA in order to produce desmethyldesacetylpyrophen. Although the A domain does not discriminate between 2 enantiomeric phenylalanines, the downstream KS domain must play a gate keeping role to stereoselectively accept the L-phenylalanyl-S-phosphopantetheine (Ppant)-T domain intermediate for chain elongation. The resulting amino acid derived diketide is off-loaded through lactonization to yield the alpha-pyrone intermediate desmethyldesacetylpyrophen. The cluster-specific O-methyltransferase (OMT) then methylates desmethyldesacetylpyrophen to desacetylpyrophen, which is further acetylated to pyrophen by an endogenous yet unidentified N-acetyltransferase. ATPKS has relaxed substrate specificity to activate and extend branched-chain amino acid L-leucine to produce small amounts of campyrone B. This chain is PKS-NRPS hybrid synthetase ATPKS, found in Aspergillus niger (strain ATCC 1015 / CBS 113.46 / FGSC A1144 / LSHB Ac4 / NCTC 3858a / NRRL 328 / USDA 3528.7).